A 316-amino-acid polypeptide reads, in one-letter code: Pantothenate kinase (316 aa).

96 to 103 (GSVAVGKS) serves as a coordination point for ATP.

This sequence belongs to the prokaryotic pantothenate kinase family.

It is found in the cytoplasm. It catalyses the reaction (R)-pantothenate + ATP = (R)-4'-phosphopantothenate + ADP + H(+). It functions in the pathway cofactor biosynthesis; coenzyme A biosynthesis; CoA from (R)-pantothenate: step 1/5. The protein is Pantothenate kinase of Shouchella clausii (strain KSM-K16) (Alkalihalobacillus clausii).